The primary structure comprises 132 residues: N,N-dimethylformamidase alpha subunit (132 aa).

As to quaternary structure, heterotetramer of two DmfA1 (alpha) and two DmfA2 (beta) subunits.

The enzyme catalyses N,N-dimethylformamide + H2O = dimethylamine + formate. Its activity is regulated as follows. Activity is slightly inhibited by Mg(2+) and Mn(2+), and slightly increased by Cu(2+). Activity is slightly inhibited by the chelating agents 8-hydroxyquinoline, ethylenediaminetetraacetate, o-phenanthroline and 2,2'-bipyridyl. Its function is as follows. Hydrolyzes N,N-dimethylformamide, and to a lesser extent N,N-dimethylacetamide and N,N-diethylacetamide. Has no activity against the substituted amides N-methylformamide, N-ethylformamide, N-ethylformamide and N-methylacetamide or the unsubstituted amides formamide, nicotinamide, acetoamide, benzamide, acetamide and acrylamide. The protein is N,N-dimethylformamidase alpha subunit of Alcaligenes sp.